A 247-amino-acid chain; its full sequence is Adenosylcobinamide-GDP ribazoletransferase (247 aa).

5 consecutive transmembrane segments (helical) span residues 34–54 (IVMFPFIGLILGGVSGLIFIL), 59–79 (CGIPLAALFCILALALLTGGF), 113–133 (GGLALIFVLLTKILVVSELAL), 138–158 (MLAALAAACAAGRGSAVLLMY), and 187–207 (LAVIVATVLLPGMQGLAAMVV).

Belongs to the CobS family. The cofactor is Mg(2+).

Its subcellular location is the cell inner membrane. The catalysed reaction is alpha-ribazole + adenosylcob(III)inamide-GDP = adenosylcob(III)alamin + GMP + H(+). The enzyme catalyses alpha-ribazole 5'-phosphate + adenosylcob(III)inamide-GDP = adenosylcob(III)alamin 5'-phosphate + GMP + H(+). The protein operates within cofactor biosynthesis; adenosylcobalamin biosynthesis; adenosylcobalamin from cob(II)yrinate a,c-diamide: step 7/7. Joins adenosylcobinamide-GDP and alpha-ribazole to generate adenosylcobalamin (Ado-cobalamin). Also synthesizes adenosylcobalamin 5'-phosphate from adenosylcobinamide-GDP and alpha-ribazole 5'-phosphate. The polypeptide is Adenosylcobinamide-GDP ribazoletransferase (Salmonella choleraesuis (strain SC-B67)).